The chain runs to 296 residues: Probable GTP 3',8-cyclase (296 aa).

Residues 5-230 form the Radical SAM core domain; that stretch reads EYGRVVTNLR…HRRTQYFTPK (226 aa). R14 serves as a coordination point for GTP. Residues C21 and C25 each contribute to the [4Fe-4S] cluster site. Y27 provides a ligand contact to S-adenosyl-L-methionine. C28 provides a ligand contact to [4Fe-4S] cluster. K61 is a GTP binding site. G65 is an S-adenosyl-L-methionine binding site. GTP is bound at residue T89. S-adenosyl-L-methionine is bound at residue S113. Residue K150 participates in GTP binding. Residues C245 and C248 each contribute to the [4Fe-4S] cluster site. 250–252 contributes to the GTP binding site; the sequence is RMR. C262 contributes to the [4Fe-4S] cluster binding site.

This sequence belongs to the radical SAM superfamily. MoaA family. [4Fe-4S] cluster is required as a cofactor.

The enzyme catalyses GTP + AH2 + S-adenosyl-L-methionine = (8S)-3',8-cyclo-7,8-dihydroguanosine 5'-triphosphate + 5'-deoxyadenosine + L-methionine + A + H(+). The protein operates within cofactor biosynthesis; molybdopterin biosynthesis. In terms of biological role, catalyzes the cyclization of GTP to (8S)-3',8-cyclo-7,8-dihydroguanosine 5'-triphosphate. In Archaeoglobus fulgidus (strain ATCC 49558 / DSM 4304 / JCM 9628 / NBRC 100126 / VC-16), this protein is Probable GTP 3',8-cyclase.